A 194-amino-acid polypeptide reads, in one-letter code: Thymidine kinase (194 aa).

ATP-binding positions include 15 to 22 (GSMFSGKS) and 88 to 91 (DEVQ). The active-site Proton acceptor is the glutamate 89. Cysteine 145, cysteine 148, cysteine 183, and cysteine 186 together coordinate Zn(2+).

The protein belongs to the thymidine kinase family. In terms of assembly, homotetramer.

The protein resides in the cytoplasm. It catalyses the reaction thymidine + ATP = dTMP + ADP + H(+). The protein is Thymidine kinase of Bacillus anthracis (strain A0248).